Consider the following 134-residue polypeptide: Aspartate 1-decarboxylase (134 aa).

S25 (schiff-base intermediate with substrate; via pyruvic acid) is an active-site residue. A Pyruvic acid (Ser) modification is found at S25. A substrate-binding site is contributed by T57. The Proton donor role is filled by Y58. Substrate is bound at residue G73–A75.

This sequence belongs to the PanD family. Heterooctamer of four alpha and four beta subunits. It depends on pyruvate as a cofactor. Is synthesized initially as an inactive proenzyme, which is activated by self-cleavage at a specific serine bond to produce a beta-subunit with a hydroxyl group at its C-terminus and an alpha-subunit with a pyruvoyl group at its N-terminus.

It localises to the cytoplasm. It carries out the reaction L-aspartate + H(+) = beta-alanine + CO2. It participates in cofactor biosynthesis; (R)-pantothenate biosynthesis; beta-alanine from L-aspartate: step 1/1. Catalyzes the pyruvoyl-dependent decarboxylation of aspartate to produce beta-alanine. The protein is Aspartate 1-decarboxylase of Mycolicibacterium gilvum (strain PYR-GCK) (Mycobacterium gilvum (strain PYR-GCK)).